A 142-amino-acid chain; its full sequence is MRTEVAKKETVNHQWFVVDAENVVLGRLATQVANVLRGKHKPMYTPSVDTGDFVVIVNAEKIALTGNKMADKVYYSHSGFPGGIKSSTAAAMLSKKPEELIRKAVKGMLPKNKLARHMLKKLKVYSGGAHPHEAQQPAQLSL.

The protein belongs to the universal ribosomal protein uL13 family. As to quaternary structure, part of the 50S ribosomal subunit.

Functionally, this protein is one of the early assembly proteins of the 50S ribosomal subunit, although it is not seen to bind rRNA by itself. It is important during the early stages of 50S assembly. This chain is Large ribosomal subunit protein uL13, found in Trichlorobacter lovleyi (strain ATCC BAA-1151 / DSM 17278 / SZ) (Geobacter lovleyi).